A 204-amino-acid polypeptide reads, in one-letter code: U1 small nuclear ribonucleoprotein C (204 aa).

The segment at Phe4–Asp36 adopts a Matrin-type zinc-finger fold. The segment at Ala65–Arg204 is disordered. 2 stretches are compositionally biased toward pro residues: residues Gly77–Pro154 and Ala166–Ala192.

Belongs to the U1 small nuclear ribonucleoprotein C family. U1 snRNP is composed of the 7 core Sm proteins B/B', D1, D2, D3, E, F and G that assemble in a heptameric protein ring on the Sm site of the small nuclear RNA to form the core snRNP, and at least 3 U1 snRNP-specific proteins U1-70K, U1-A and U1-C. U1-C interacts with U1 snRNA and the 5' splice-site region of the pre-mRNA.

The protein localises to the nucleus. Component of the spliceosomal U1 snRNP, which is essential for recognition of the pre-mRNA 5' splice-site and the subsequent assembly of the spliceosome. U1-C is directly involved in initial 5' splice-site recognition for both constitutive and regulated alternative splicing. The interaction with the 5' splice-site seems to precede base-pairing between the pre-mRNA and the U1 snRNA. Stimulates commitment or early (E) complex formation by stabilizing the base pairing of the 5' end of the U1 snRNA and the 5' splice-site region. This Fusarium vanettenii (strain ATCC MYA-4622 / CBS 123669 / FGSC 9596 / NRRL 45880 / 77-13-4) (Fusarium solani subsp. pisi) protein is U1 small nuclear ribonucleoprotein C.